A 982-amino-acid chain; its full sequence is Zinc finger and BTB domain-containing protein 4 (982 aa).

Residues 30-131 (CDVTLIAGDT…IYSARLALPG (102 aa)) enclose the BTB domain. Lys40 is covalently cross-linked (Glycyl lysine isopeptide (Lys-Gly) (interchain with G-Cter in SUMO2)). Positions 71–103 (TGGSAPSPATTTAASSSSSSPPPASPHSSSPPR) are disordered. The span at 74 to 89 (SAPSPATTTAASSSSS) shows a compositional bias: low complexity. Residues 165–324 (VPPAPTSMVT…CRYCEKVFAL (160 aa)) form an interaction with CBFA2T3 region. The C2H2-type 1; atypical zinc-finger motif lies at 210-232 (FPCPRCGKSFIHPKRLQTHEAQC). Residues 234 to 255 (RGSNTRGSAGLGPGVSGSGGPA) form a disordered region. Over residues 242 to 255 (AGLGPGVSGSGGPA) the composition is skewed to gly residues. 3 consecutive C2H2-type zinc fingers follow at residues 285–307 (YVCAACERSYVTLSSLKRHSNVH), 313–335 (YPCRYCEKVFALAEYRTKHEVWH), and 341–364 (YQCIFCWDTFVTYYNLKTHQRAFH). Ser367 bears the Phosphoserine mark. A disordered region spans residues 404–578 (KTYSQGAPEA…QLQAPPPLCQ (175 aa)). Over residues 430–446 (SPQPLPPPAPEPGPPPS) the composition is skewed to pro residues. Residues 467–477 (AAGGGPAGTGG) show a composition bias toward gly residues. Low complexity-rich tracts occupy residues 478 to 488 (SQAASVITYTT) and 507 to 529 (ATPTSPASTAVSPATAAGPATAT). Lys548 participates in a covalent cross-link: Glycyl lysine isopeptide (Lys-Gly) (interchain with G-Cter in SUMO2). The segment covering 552-565 (GLSGSGGSPTGTGR) has biased composition (gly residues). Lys590 is covalently cross-linked (Glycyl lysine isopeptide (Lys-Gly) (interchain with G-Cter in SUMO2)). Over residues 591–600 (RRISETDLRP) the composition is skewed to basic and acidic residues. Disordered stretches follow at residues 591–700 (RRIS…ERRH), 715–738 (LRKHQEAHSGGSHTSRTGRRSSTR), 759–839 (QRHA…GGGS), and 854–880 (GGSREPSAGKGKPGNEGSLGASEGDRM). Positions 604-627 (SGEEVEESEEEEEEEEEEDQEEQE) are enriched in acidic residues. Basic and acidic residues predominate over residues 628-637 (ESKAGGEDQL). 2 consecutive C2H2-type zinc fingers follow at residues 700–722 (HRCGDCAQAFATVRKLRKHQEAH) and 739–761 (FTCPHCAKVCKTAAALNRHGQRH). A phosphothreonine; by HIPK2 mark is found at Thr769 and Thr771. Positions 799 to 820 (SSSSGEAGSGSAAAAEASESAS) are enriched in low complexity. Thr953 bears the Phosphothreonine; by HIPK2 mark.

Interacts with HIPK2. Interacts with CBFA2T3. Interacts with ZBTB38. Post-translationally, phosphorylated by HIPK2. This phosphorylation reduces stability and triggers ZBTB4 protein degradation in response to DNA damage. Expressed in adult and aged myogenic satellite cells.

It localises to the nucleus. The protein localises to the chromosome. Transcriptional repressor with bimodal DNA-binding specificity. Represses transcription in a methyl-CpG-dependent manner. Binds with a higher affinity to methylated CpG dinucleotides in the consensus sequence 5'-CGCG-3' but can also bind to the non-methylated consensus sequence 5'-CTGCNA-3' also known as the consensus kaiso binding site (KBS). Can also bind specifically to a single methyl-CpG pair and can bind hemimethylated DNA but with a lower affinity compared to methylated DNA. Plays a role in postnatal myogenesis, may be involved in the regulation of satellite cells self-renewal. In Mus musculus (Mouse), this protein is Zinc finger and BTB domain-containing protein 4 (Zbtb4).